The following is a 486-amino-acid chain: Secreted protein C (486 aa).

A signal peptide spans 1-22 (MKINIILLFVGLILAFAVLSNA). The segment at 30 to 332 (GVNPFDNNNS…SGSHGGSSSH (303 aa)) is disordered. Asparagine 37 carries N-linked (GlcNAc...) asparagine glycosylation. Residues 41 to 60 (SGSGSGSGGGSSSSGSGTGQ) show a composition bias toward gly residues. Low complexity predominate over residues 61–318 (SSGTVSSSGS…TGSSEYSSSS (258 aa)). N-linked (GlcNAc...) asparagine glycans are attached at residues asparagine 73, asparagine 74, asparagine 83, asparagine 112, asparagine 129, asparagine 149, and asparagine 174.

It belongs to the Sct family.

It is found in the secreted. The protein is Secreted protein C of Dictyostelium discoideum (Social amoeba).